The primary structure comprises 491 residues: AAA-ATPase At2g46620 (491 aa).

Residues 1-21 (MGILWDSFLLLLVSTFALFLV) form a helical membrane-spanning segment. Position 238-245 (238-245 (GPSGTGKS)) interacts with ATP. The tract at residues 423 to 460 (GTGRRLLLENGSRKSTSEDVSDDMSGSLCGGGGGSSPA) is disordered.

Belongs to the AAA ATPase family. BCS1 subfamily. Requires Mg(2+) as cofactor.

The protein resides in the membrane. The enzyme catalyses ATP + H2O = ADP + phosphate + H(+). This Arabidopsis thaliana (Mouse-ear cress) protein is AAA-ATPase At2g46620.